Here is an 863-residue protein sequence, read N- to C-terminus: Oleate activated transcription factor 3 (863 aa).

The zn(2)-C6 fungal-type DNA-binding region spans 19-47 (CTNCKKRKSKCDRTKPCGTCVRLGDVDSC). Over residues 52–63 (DSSGQPESSPSL) the composition is skewed to polar residues. Residues 52-99 (DSSGQPESSPSLNDADPLRKQSTPAERISPGFIKKRRSSQTRQDEDHW) form a disordered region.

Belongs to the OAF3 family.

The protein resides in the cytoplasm. It localises to the nucleus. The protein localises to the mitochondrion. In terms of biological role, transcriptional inhibitor with a significantly increased number of target genes in response to oleate. The sequence is that of Oleate activated transcription factor 3 (OAF3) from Saccharomyces cerevisiae (strain YJM789) (Baker's yeast).